A 386-amino-acid chain; its full sequence is Patatin-T5 (386 aa).

Positions 1–23 (MATTNSFTILIFMILATTSSTFA) are cleaved as a signal peptide. One can recognise a PNPLA domain in the interval 32–229 (LSIDGGGIKG…TVDDPALLSI (198 aa)). The GXGXXG signature appears at 36–41 (GGGIKG). Residue asparagine 60 is glycosylated (N-linked (GlcNAc...) asparagine). Positions 75–79 (GTSTG) match the GXSXG motif. Residue serine 77 is the Nucleophile of the active site. 2 N-linked (GlcNAc...) asparagine glycosylation sites follow: asparagine 90 and asparagine 202. The active-site Proton acceptor is the aspartate 215. The short motif at 215 to 217 (DGA) is the DGA/G element.

Belongs to the patatin family. Post-translationally, N-glycosylated. As to expression, tuber and stolon.

The protein localises to the vacuole. Functionally, probable lipolytic acyl hydrolase (LAH), an activity which is thought to be involved in the response of tubers to pathogens. The sequence is that of Patatin-T5 from Solanum tuberosum (Potato).